A 228-amino-acid chain; its full sequence is Triosephosphate isomerase (228 aa).

9 to 11 (NFK) contributes to the substrate binding site. His93 acts as the Electrophile in catalysis. Catalysis depends on Glu141, which acts as the Proton acceptor. Substrate contacts are provided by residues Ile146, Gly181, and 202-203 (AS).

Belongs to the triosephosphate isomerase family. In terms of assembly, homotetramer; dimer of dimers.

The protein resides in the cytoplasm. It catalyses the reaction D-glyceraldehyde 3-phosphate = dihydroxyacetone phosphate. It participates in carbohydrate biosynthesis; gluconeogenesis. Its pathway is carbohydrate degradation; glycolysis; D-glyceraldehyde 3-phosphate from glycerone phosphate: step 1/1. In terms of biological role, involved in the gluconeogenesis. Catalyzes stereospecifically the conversion of dihydroxyacetone phosphate (DHAP) to D-glyceraldehyde-3-phosphate (G3P). The chain is Triosephosphate isomerase from Pyrobaculum calidifontis (strain DSM 21063 / JCM 11548 / VA1).